The sequence spans 443 residues: Exodeoxyribonuclease 7 large subunit (443 aa).

This sequence belongs to the XseA family. In terms of assembly, heterooligomer composed of large and small subunits.

The protein resides in the cytoplasm. It catalyses the reaction Exonucleolytic cleavage in either 5'- to 3'- or 3'- to 5'-direction to yield nucleoside 5'-phosphates.. Its function is as follows. Bidirectionally degrades single-stranded DNA into large acid-insoluble oligonucleotides, which are then degraded further into small acid-soluble oligonucleotides. The protein is Exodeoxyribonuclease 7 large subunit of Legionella pneumophila (strain Lens).